The following is a 2606-amino-acid chain: Large tegument protein deneddylase (2606 aa).

The segment at 1 to 235 (MAFQAQTDTG…LKRSGAYVNL (235 aa)) is deubiquitination activity. The 212-residue stretch at 14-225 (LATASSHQGD…LLANYGIASA (212 aa)) folds into the Peptidase C76 domain. Active-site residues include cysteine 34, aspartate 163, and histidine 165. Disordered regions lie at residues 318-349 (IAIS…PNEA), 390-411 (DTDS…KSGQ), 1020-1135 (KKGL…ESSE), 2253-2316 (PEIH…PTPL), and 2434-2458 (PPHD…ERKY). Residues 1038-1050 (TPVTDSKLIQDSQ) show a composition bias toward polar residues. Positions 1051–1061 (QNDRHQKEKPL) are enriched in basic and acidic residues. A compositionally biased stretch (polar residues) spans 1085-1097 (KPQNLSLPVSTNK). Over residues 1105–1132 (ESSPIESTSPSHSPVSSMESQNGSFSLE) the composition is skewed to low complexity. Over residues 2304-2316 (PNPPRPTTFPTPL) the composition is skewed to pro residues.

This sequence belongs to the herpesviridae large tegument protein family. As to quaternary structure, interacts with host CUL1 and CUL4A; these interactions inhibit the E3 ligase activity of cullins. Interacts with inner tegument protein. Interacts with capsid vertex specific component CVC2. Interacts with the major capsid protein/MCP.

The protein localises to the virion tegument. It localises to the host cytoplasm. Its subcellular location is the host nucleus. It carries out the reaction Thiol-dependent hydrolysis of ester, thioester, amide, peptide and isopeptide bonds formed by the C-terminal Gly of ubiquitin (a 76-residue protein attached to proteins as an intracellular targeting signal).. Its function is as follows. Large tegument protein that plays multiple roles in the viral cycle. During viral entry, remains associated with the capsid while most of the tegument is detached and participates in the capsid transport toward the host nucleus. Plays a role in the routing of the capsid at the nuclear pore complex and subsequent uncoating. Within the host nucleus, acts as a deneddylase and promotes the degradation of nuclear CRLs (cullin-RING ubiquitin ligases) and thereby stabilizes nuclear CRL substrates, while cytoplasmic CRLs remain unaffected. These modifications prevent host cell cycle S-phase progression and create a favorable environment allowing efficient viral genome replication. Participates later in the secondary envelopment of capsids. Indeed, plays a linker role for the association of the outer viral tegument to the capsids together with the inner tegument protein. This chain is Large tegument protein deneddylase (64), found in Connochaetes taurinus (Blue wildebeest).